The following is a 430-amino-acid chain: Forkhead box protein N2 (430 aa).

The segment at 1-47 (MGPATGMTPDKNIESPTAEKVPGLSQTENMGSLPEEVGAARPKASMV) is disordered. Residues 108–204 (KPPYSFSLLI…QALKKQPFSS (97 aa)) constitute a DNA-binding region (fork-head). Disordered regions lie at residues 299–326 (NIDP…SVSS) and 338–391 (PKNS…EASQ). Acidic residues predominate over residues 355–366 (DDTDIDYEEDTL). The span at 381-390 (HGSKLRKEAS) shows a compositional bias: basic and acidic residues.

In terms of tissue distribution, expressed in the developing eye from stage 23. Localized to the prospective retinal layer and a layer of cells lateral to the ventricular zone. At stage 29, expression extends to the branchial arches and the brain. At stage 33/34, expressed in the vagal ganglion. At stage 36, expression in the retina decreases. Not expressed in the eye lens.

The protein localises to the nucleus. This chain is Forkhead box protein N2, found in Xenopus laevis (African clawed frog).